We begin with the raw amino-acid sequence, 295 residues long: Large ribosomal subunit protein uL15m (295 aa).

The transit peptide at 1–20 directs the protein to the mitochondrion; sequence MAGTARGCGTSLDLLRSLPR. Positions 21–67 are disordered; sequence VSLANLKPSPNSRKRERRPRDRRRGRKCGRGHKGERQRGTRPRLGFE. Residues 32–51 are compositionally biased toward basic residues; sequence SRKRERRPRDRRRGRKCGRG.

It belongs to the universal ribosomal protein uL15 family. In terms of assembly, component of the mitochondrial ribosome large subunit (39S) which comprises a 16S rRNA and about 50 distinct proteins.

It localises to the mitochondrion. The protein is Large ribosomal subunit protein uL15m (Mrpl15) of Mus musculus (Mouse).